The chain runs to 224 residues: Large ribosomal subunit protein uL4 (224 aa).

The tract at residues 52 to 109 is disordered; the sequence is AAARQGTHSTKTRGDVSGGGRKPYRQKGTGRARQGSTRTPQFTGGGVVHGPKPRDYSQ.

The protein belongs to the universal ribosomal protein uL4 family. Part of the 50S ribosomal subunit.

One of the primary rRNA binding proteins, this protein initially binds near the 5'-end of the 23S rRNA. It is important during the early stages of 50S assembly. It makes multiple contacts with different domains of the 23S rRNA in the assembled 50S subunit and ribosome. In terms of biological role, forms part of the polypeptide exit tunnel. The protein is Large ribosomal subunit protein uL4 of Mycobacterium ulcerans (strain Agy99).